A 301-amino-acid polypeptide reads, in one-letter code: Probable alpha-L-glutamate ligase (301 aa).

In terms of domain architecture, ATP-grasp spans 104-287; sequence LQLLSRKGIG…IAGIIIQYLE (184 aa). Residues Lys141, 178 to 179, Asp187, and 211 to 213 contribute to the ATP site; these read EY and RSN. Mg(2+)-binding residues include Asp248, Glu260, and Asn262. Positions 248, 260, and 262 each coordinate Mn(2+).

The protein belongs to the RimK family. Mg(2+) serves as cofactor. Requires Mn(2+) as cofactor.

The chain is Probable alpha-L-glutamate ligase from Pseudomonas aeruginosa (strain UCBPP-PA14).